The following is a 257-amino-acid chain: Imidazole glycerol phosphate synthase subunit HisF (257 aa).

Active-site residues include Asp12 and Asp131.

It belongs to the HisA/HisF family. Heterodimer of HisH and HisF.

It localises to the cytoplasm. It carries out the reaction 5-[(5-phospho-1-deoxy-D-ribulos-1-ylimino)methylamino]-1-(5-phospho-beta-D-ribosyl)imidazole-4-carboxamide + L-glutamine = D-erythro-1-(imidazol-4-yl)glycerol 3-phosphate + 5-amino-1-(5-phospho-beta-D-ribosyl)imidazole-4-carboxamide + L-glutamate + H(+). The protein operates within amino-acid biosynthesis; L-histidine biosynthesis; L-histidine from 5-phospho-alpha-D-ribose 1-diphosphate: step 5/9. In terms of biological role, IGPS catalyzes the conversion of PRFAR and glutamine to IGP, AICAR and glutamate. The HisF subunit catalyzes the cyclization activity that produces IGP and AICAR from PRFAR using the ammonia provided by the HisH subunit. The chain is Imidazole glycerol phosphate synthase subunit HisF from Burkholderia orbicola (strain MC0-3).